A 502-amino-acid polypeptide reads, in one-letter code: Cytochrome P450 71B17 (502 aa).

A helical transmembrane segment spans residues 1–21 (MAISLLCLFLITFVSLTIVGC). Position 444 (Cys444) interacts with heme.

It belongs to the cytochrome P450 family. Heme is required as a cofactor.

Its subcellular location is the membrane. The protein is Cytochrome P450 71B17 (CYP71B17) of Arabidopsis thaliana (Mouse-ear cress).